The sequence spans 681 residues: Cell cycle checkpoint protein RAD17 (681 aa).

An RAD1-binding motif motif is present at residues 17–25 (DWVDPSFDD). Residues 42–61 (VNNSSHRRKNGPSTLESSRF) form a disordered region. Thr-55 carries the phosphothreonine modification. Ser-71 and Ser-86 each carry phosphoserine. 137–144 (GPPGCGKT) provides a ligand contact to ATP. 2 disordered regions span residues 344-377 (SSKG…KPDR) and 606-681 (HGMI…SDGT). The residue at position 359 (Ser-359) is a Phosphoserine. Residues 432–681 (LVEPEEVVEM…IIEDYESDGT (250 aa)) form an interaction with MCM7 region. A compositionally biased stretch (polar residues) spans 631–662 (EPTQATVPETWSLPLSQNSASELPASQPQPFS). A Phosphothreonine; by ATM modification is found at Thr-633. Phosphoserine; by ATR and ATM is present on residues Ser-646 and Ser-656. Residues 666–681 (DMEENIIIEDYESDGT) are compositionally biased toward acidic residues.

Belongs to the rad17/RAD24 family. In terms of assembly, part of a DNA-binding complex containing RFC2, RFC3, RFC4 and RFC5. Interacts with RAD1 and RAD9 within the 9-1-1 (RAD1-RAD9-HUS1) complex. Interacts with RAD9B, POLE, SNU13 and MCM7. DNA damage promotes interaction with ATR or ATM and disrupts interaction with the 9-1-1 (RAD1-RAD9-HUS1) complex. Interacts (when phosphorylated) with NBN; promoting recruitment of the MRN complex to DNA damage sites. Post-translationally, phosphorylation on Ser-646 and Ser-656 is cell cycle-regulated, enhanced by genotoxic stress, and required for activation of checkpoint signaling. Phosphorylation is mediated by ATR upon UV or replication arrest, whereas it may be mediated both by ATR and ATM upon ionizing radiation. Phosphorylation on both sites is required for interaction with RAD1 but dispensable for interaction with RFC3 or RFC4. Phosphorylation at Thr-633 by ATM in response to DNA damage promotes interaction with NBN and recruitment of the MRN complex to DNA damage sites. As to expression, overexpressed in various cancer cell lines and in colon carcinoma (at protein level). Isoform 2 and isoform 3 are the most abundant isoforms in non irradiated cells (at protein level). Ubiquitous at low levels. Highly expressed in testis, where it is expressed within the germinal epithelium of the seminiferous tubuli. Weakly expressed in seminomas (testicular tumors).

Its subcellular location is the nucleus. The protein resides in the chromosome. In terms of biological role, essential for sustained cell growth, maintenance of chromosomal stability, and ATR-dependent checkpoint activation upon DNA damage. Has a weak ATPase activity required for binding to chromatin. Participates in the recruitment of the 9-1-1 (RAD1-RAD9-HUS1) complex and RHNO1 onto chromatin, and in CHEK1 activation. Involved in homologous recombination by mediating recruitment of the MRN complex to DNA damage sites. May also serve as a sensor of DNA replication progression. In Homo sapiens (Human), this protein is Cell cycle checkpoint protein RAD17.